A 101-amino-acid chain; its full sequence is Cell division protein FtsB (101 aa).

Residues Met1–Ile3 are Cytoplasmic-facing. The helical transmembrane segment at Val4–Leu21 threads the bilayer. The Periplasmic segment spans residues Gly22–Gln101. A coiled-coil region spans residues Glu33–Leu53.

Belongs to the FtsB family. In terms of assembly, part of a complex composed of FtsB, FtsL and FtsQ.

It is found in the cell inner membrane. Its function is as follows. Essential cell division protein. May link together the upstream cell division proteins, which are predominantly cytoplasmic, with the downstream cell division proteins, which are predominantly periplasmic. In Polynucleobacter necessarius subsp. necessarius (strain STIR1), this protein is Cell division protein FtsB.